The following is a 970-amino-acid chain: Longitudinals lacking protein, isoforms F/I/K/T (970 aa).

The 66-residue stretch at 32-97 folds into the BTB domain; it reads VDCTLAAEGK…MYRGEVNISQ (66 aa). Disordered regions lie at residues 115-200, 228-340, 447-468, and 790-843; these read LSDN…SSVL, SSGP…ASAS, DAQQ…EGAQ, and QTVH…LQDD. 4 stretches are compositionally biased toward low complexity: residues 162–175, 228–251, 263–293, and 329–340; these read SGDV…SSSP, SSGP…LTST, TSST…QTTS, and NSATGPNPASAS. 2 stretches are compositionally biased toward polar residues: residues 447-456 and 808-818; these read DAQQRDPQAS and QLQTHHIQTVV. The segment covering 819–828 has biased composition (low complexity); the sequence is QSSSGQQQHD. The C2H2-type 1; degenerate zinc-finger motif lies at 903–925; the sequence is YVCRHCGKKYRWKSTLRRHENVE. A C2H2-type 2 zinc finger spans residues 933–955; that stretch reads HPCPYCSYKAKQRGNLGVHVRKH.

By stage 11, isoform F is expressed throughout the mesoderm whereas isoform T, and at low levels isoform I, is expressed throughout the ectoderm. Isoform K is expressed in both mesoderm and ectoderm. Expression becomes restricted during later stages; starting from stage 14 to 15, isoform F is expressed in the gut. Isoform I is expressed in the CNS. Isoform I and isoform F show expression in the epithelium starting at stage 14, though for isoform I the CNS expression remains predominant. Expression is also seen in specific types of cells in the embryo; isoform K is expressed in the ventral furrow at stage 5 and in a dynamic pattern in the ventral neurogenic region starting at stage 7. Isoform T is expressed around the tracheal pits at stage 11. Isoform F shows transient enrichment in a dorsal cell layer in the CNS at stages 13 and 14.

It localises to the nucleus. Functionally, putative transcription factor required for axon growth and guidance in the central and peripheral nervous systems. Repels CNS axons away from the midline by promoting the expression of the midline repellent sli and its receptor robo. The chain is Longitudinals lacking protein, isoforms F/I/K/T from Drosophila melanogaster (Fruit fly).